Here is a 565-residue protein sequence, read N- to C-terminus: Mitochondrial distribution and morphology protein 34 (565 aa).

The region spanning 1–195 (MAFNFNWSPL…LPAIIHRLSL (195 aa)) is the SMP-LTD domain. 3 disordered regions span residues 207–236 (EDQD…VDAL), 296–317 (PSDQ…LSRT), and 348–504 (STYG…RQLP). The span at 358-370 (RHSKAHARKRKKR) shows a compositional bias: basic residues. Residues 371 to 381 (VVDLRRPKQPE) are compositionally biased toward basic and acidic residues. Positions 382–401 (SETASVTDESSFTETTSAPS) are enriched in polar residues. 2 stretches are compositionally biased toward basic and acidic residues: residues 446 to 472 (LRRD…HAEV) and 483 to 496 (IRHE…EKQE).

Belongs to the MDM34 family. As to quaternary structure, component of the ER-mitochondria encounter structure (ERMES) or MDM complex, composed of mmm1, mdm10, mdm12 and mdm34.

It localises to the mitochondrion outer membrane. In terms of biological role, component of the ERMES/MDM complex, which serves as a molecular tether to connect the endoplasmic reticulum (ER) and mitochondria. Components of this complex are involved in the control of mitochondrial shape and protein biogenesis, and function in nonvesicular lipid trafficking between the ER and mitochondria. Mdm34 is required for the interaction of the ER-resident membrane protein mmm1 and the outer mitochondrial membrane-resident beta-barrel protein mdm10. The sequence is that of Mitochondrial distribution and morphology protein 34 from Aspergillus terreus (strain NIH 2624 / FGSC A1156).